The chain runs to 370 residues: Protein Brevis radix-like 3 (370 aa).

Positions 140-221 (KEWVAQVEPG…NFEKVMELYN (82 aa)) constitute a BRX 1 domain. Polar residues-rich tracts occupy residues 231–248 (LQTPPVSEDGGSQIQSVK) and 266–291 (PGSSGFASTPKLSSISGTKTETSSID). Residues 231 to 316 (LQTPPVSEDG…VSNASDMESE (86 aa)) form a disordered region. The BRX 2 domain maps to 315-370 (SEWVEQDEPGIYITIRALPDGNRELRRVRFSRDKFGETHARLWWEQNRARIQQQYL).

This sequence belongs to the BRX family. As to expression, expressed in roots.

The protein resides in the nucleus. The polypeptide is Protein Brevis radix-like 3 (BRXL3) (Arabidopsis thaliana (Mouse-ear cress)).